The following is a 312-amino-acid chain: Ribonuclease Z (312 aa).

Residues His-62, His-64, Asp-66, His-67, His-144, Asp-215, and His-273 each contribute to the Zn(2+) site. The active-site Proton acceptor is the Asp-66.

It belongs to the RNase Z family. As to quaternary structure, homodimer. Zn(2+) serves as cofactor.

It catalyses the reaction Endonucleolytic cleavage of RNA, removing extra 3' nucleotides from tRNA precursor, generating 3' termini of tRNAs. A 3'-hydroxy group is left at the tRNA terminus and a 5'-phosphoryl group is left at the trailer molecule.. In terms of biological role, zinc phosphodiesterase, which displays some tRNA 3'-processing endonuclease activity. Probably involved in tRNA maturation, by removing a 3'-trailer from precursor tRNA. This is Ribonuclease Z from Prochlorococcus marinus (strain MIT 9515).